Here is a 257-residue protein sequence, read N- to C-terminus: Transmembrane protein C257L (257 aa).

A run of 2 helical transmembrane segments spans residues 123-143 and 163-183; these read LELL…FTAL and MMIF…YVLV.

It belongs to the asfivirus C257R family.

It localises to the host membrane. The protein localises to the virion. In Ornithodoros (relapsing fever ticks), this protein is Transmembrane protein C257L.